A 96-amino-acid chain; its full sequence is UPF0235 protein VV1_1522 (96 aa).

Belongs to the UPF0235 family.

This Vibrio vulnificus (strain CMCP6) protein is UPF0235 protein VV1_1522.